The following is a 188-amino-acid chain: Adenine phosphoribosyltransferase (188 aa).

The protein belongs to the purine/pyrimidine phosphoribosyltransferase family. Homodimer.

Its subcellular location is the cytoplasm. It carries out the reaction AMP + diphosphate = 5-phospho-alpha-D-ribose 1-diphosphate + adenine. The protein operates within purine metabolism; AMP biosynthesis via salvage pathway; AMP from adenine: step 1/1. Its function is as follows. Catalyzes a salvage reaction resulting in the formation of AMP, that is energically less costly than de novo synthesis. The protein is Adenine phosphoribosyltransferase of Paraburkholderia xenovorans (strain LB400).